Here is a 248-residue protein sequence, read N- to C-terminus: MKILISPSKTQNKNIDSFSNNEENILFTNKTNELNDLLIKSINNEKFNSWLELKNNSLIEETIKDIKEFKNNKAYKAIEFYDGLQFKNILYSQLSETQKTKLNESLIIISGFYGIVFPNSYIKPYRLMLGSKINIPNYKNLYDFWFKEFNQKLEELNPDKLIINLASGEYSKLIDNSIFNVINVDFKLFKSNKYVSLSTFSKQCRGYFINQFLNINLDINKIKDLDILGFKFNNELSYKNNYIFTKAY.

The protein belongs to the UPF0246 family.

The polypeptide is UPF0246 protein MYPE6270 (Malacoplasma penetrans (strain HF-2) (Mycoplasma penetrans)).